We begin with the raw amino-acid sequence, 372 residues long: Neutral protease 2 homolog MGYG_06241 (372 aa).

An N-terminal signal peptide occupies residues 1-19 (MQFFTAIAAISALVAPALA). A propeptide spanning residues 20–188 (LPTQELPQAP…THFAGTLNRR (169 aa)) is cleaved from the precursor. 2 cysteine pairs are disulfide-bonded: Cys195-Cys264 and Cys271-Cys289. Zn(2+) is bound at residue His313. Glu314 is an active-site residue. Positions 317 and 328 each coordinate Zn(2+).

It belongs to the peptidase M35 family. The cofactor is Zn(2+).

Its subcellular location is the secreted. It carries out the reaction Preferential cleavage of bonds with hydrophobic residues in P1'. Also 3-Asn-|-Gln-4 and 8-Gly-|-Ser-9 bonds in insulin B chain.. In terms of biological role, secreted metalloproteinase that allows assimilation of proteinaceous substrates. Shows high activities on basic nuclear substrates such as histone and protamine. May be involved in virulence. This is Neutral protease 2 homolog MGYG_06241 from Arthroderma gypseum (strain ATCC MYA-4604 / CBS 118893) (Microsporum gypseum).